We begin with the raw amino-acid sequence, 316 residues long: MTEAFKHISVLLNESIDGLAIKPDGTYIDGTFGRGGHSRTILSKLGENGRLFSIDRDPQAIAEAQKIDDPRFTIIHGPFSGMAEYAERYDLVGQVDGVLLDLGVSSPQLDDAERGFSFMKDGPLDMRMDPTTGIPVSQWLVEADLDDITWVIREFGEDKHARRIAKGIIAYQENEENEPLTRTGQLAKLISDVAPKSFKEKKHPATRAFQAFRIYINSELEEIDTALKGAASILAPQGRISVISFHSLEDRMVKRFIRKESQGPQVPHGLPLTEEQIKALGSADLKPIGKAIKPSKDEVDENTRSRSSVLRIAEKL.

Residues 35–37 (GGH), Asp55, Phe79, Asp101, and Gln108 contribute to the S-adenosyl-L-methionine site. Residues 291–316 (AIKPSKDEVDENTRSRSSVLRIAEKL) are disordered. Residues 294 to 304 (PSKDEVDENTR) are compositionally biased toward basic and acidic residues.

This sequence belongs to the methyltransferase superfamily. RsmH family.

The protein localises to the cytoplasm. It carries out the reaction cytidine(1402) in 16S rRNA + S-adenosyl-L-methionine = N(4)-methylcytidine(1402) in 16S rRNA + S-adenosyl-L-homocysteine + H(+). Its function is as follows. Specifically methylates the N4 position of cytidine in position 1402 (C1402) of 16S rRNA. The sequence is that of Ribosomal RNA small subunit methyltransferase H from Vibrio atlanticus (strain LGP32) (Vibrio splendidus (strain Mel32)).